The sequence spans 408 residues: Argininosuccinate synthase (408 aa).

ATP is bound by residues 10–18 and Ala-37; that span reads AYSGGLDTS. Tyr-90 and Ser-95 together coordinate L-citrulline. Gly-120 provides a ligand contact to ATP. Positions 122, 126, and 127 each coordinate L-aspartate. Asn-126 provides a ligand contact to L-citrulline. L-citrulline is bound by residues Arg-130, Ser-181, Ser-190, Glu-266, and Tyr-278.

The protein belongs to the argininosuccinate synthase family. Type 1 subfamily. Homotetramer.

The protein resides in the cytoplasm. It catalyses the reaction L-citrulline + L-aspartate + ATP = 2-(N(omega)-L-arginino)succinate + AMP + diphosphate + H(+). Its pathway is amino-acid biosynthesis; L-arginine biosynthesis; L-arginine from L-ornithine and carbamoyl phosphate: step 2/3. The sequence is that of Argininosuccinate synthase from Chromobacterium violaceum (strain ATCC 12472 / DSM 30191 / JCM 1249 / CCUG 213 / NBRC 12614 / NCIMB 9131 / NCTC 9757 / MK).